Reading from the N-terminus, the 94-residue chain is Small ribosomal subunit protein bS6 (94 aa).

It belongs to the bacterial ribosomal protein bS6 family.

In terms of biological role, binds together with bS18 to 16S ribosomal RNA. This is Small ribosomal subunit protein bS6 from Fusobacterium nucleatum subsp. nucleatum (strain ATCC 25586 / DSM 15643 / BCRC 10681 / CIP 101130 / JCM 8532 / KCTC 2640 / LMG 13131 / VPI 4355).